We begin with the raw amino-acid sequence, 552 residues long: Urocanate hydratase (552 aa).

Residues 49–50 (GG), Gln127, 173–175 (GMG), Asp193, 239–240 (NA), 260–264 (QTSAH), 270–271 (YI), and Tyr319 each bind NAD(+). Residue Cys407 is part of the active site. Gly489 contacts NAD(+).

It belongs to the urocanase family. NAD(+) is required as a cofactor.

The protein resides in the cytoplasm. It catalyses the reaction 4-imidazolone-5-propanoate = trans-urocanate + H2O. It participates in amino-acid degradation; L-histidine degradation into L-glutamate; N-formimidoyl-L-glutamate from L-histidine: step 2/3. Its function is as follows. Catalyzes the conversion of urocanate to 4-imidazolone-5-propionate. The chain is Urocanate hydratase from Bacillus cereus (strain AH187).